The primary structure comprises 291 residues: tRNA dimethylallyltransferase (291 aa).

17-24 (GPTASGKS) provides a ligand contact to ATP. A substrate-binding site is contributed by 19-24 (TASGKS).

The protein belongs to the IPP transferase family. As to quaternary structure, monomer. Mg(2+) serves as cofactor.

The enzyme catalyses adenosine(37) in tRNA + dimethylallyl diphosphate = N(6)-dimethylallyladenosine(37) in tRNA + diphosphate. Its function is as follows. Catalyzes the transfer of a dimethylallyl group onto the adenine at position 37 in tRNAs that read codons beginning with uridine, leading to the formation of N6-(dimethylallyl)adenosine (i(6)A). The polypeptide is tRNA dimethylallyltransferase (Cereibacter sphaeroides (strain ATCC 17025 / ATH 2.4.3) (Rhodobacter sphaeroides)).